The following is a 337-amino-acid chain: uncharacterized protein (337 aa).

29 to 36 is a binding site for ATP; it reads GPKSSGKS.

Belongs to the archaeal ATPase family.

This is an uncharacterized protein from Methanocaldococcus jannaschii (strain ATCC 43067 / DSM 2661 / JAL-1 / JCM 10045 / NBRC 100440) (Methanococcus jannaschii).